Reading from the N-terminus, the 256-residue chain is tRNA (guanine-N(1)-)-methyltransferase (256 aa).

S-adenosyl-L-methionine is bound by residues G113 and 132-137; that span reads VGDYVL.

The protein belongs to the RNA methyltransferase TrmD family. Homodimer.

The protein resides in the cytoplasm. It carries out the reaction guanosine(37) in tRNA + S-adenosyl-L-methionine = N(1)-methylguanosine(37) in tRNA + S-adenosyl-L-homocysteine + H(+). Its function is as follows. Specifically methylates guanosine-37 in various tRNAs. The chain is tRNA (guanine-N(1)-)-methyltransferase from Coprothermobacter proteolyticus (strain ATCC 35245 / DSM 5265 / OCM 4 / BT).